Reading from the N-terminus, the 266-residue chain is Glucosamine-6-phosphate deaminase (266 aa).

The active-site Proton acceptor; for enolization step is the D72. D141 (for ring-opening step) is an active-site residue. Residue H143 is the Proton acceptor; for ring-opening step of the active site. E148 acts as the For ring-opening step in catalysis.

It belongs to the glucosamine/galactosamine-6-phosphate isomerase family. NagB subfamily. Homohexamer; trimer of disulfide-linked dimers.

It catalyses the reaction alpha-D-glucosamine 6-phosphate + H2O = beta-D-fructose 6-phosphate + NH4(+). It functions in the pathway amino-sugar metabolism; N-acetylneuraminate degradation; D-fructose 6-phosphate from N-acetylneuraminate: step 5/5. Its activity is regulated as follows. Allosterically activated by N-acetylglucosamine 6-phosphate (GlcNAc6P). Its function is as follows. Catalyzes the reversible isomerization-deamination of glucosamine 6-phosphate (GlcN6P) to form fructose 6-phosphate (Fru6P) and ammonium ion. The polypeptide is Glucosamine-6-phosphate deaminase (Escherichia coli O6:H1 (strain CFT073 / ATCC 700928 / UPEC)).